A 720-amino-acid polypeptide reads, in one-letter code: Putative fatty acid oxidation complex trifunctional enzyme (720 aa).

The tract at residues 1–384 (MQNEIKKVCV…SWHYGPFELL (384 aa)) is 3-hydroxyacyl-CoA dehydrogenase. Residues 453-720 (FVITTKMNSL…TIEKLQAIVG (268 aa)) are enoyl-CoA hydratase/isomerase.

It in the N-terminal section; belongs to the 3-hydroxyacyl-CoA dehydrogenase family. This sequence in the C-terminal section; belongs to the enoyl-CoA hydratase/isomerase family.

The catalysed reaction is a (3S)-3-hydroxyacyl-CoA + NAD(+) = a 3-oxoacyl-CoA + NADH + H(+). It carries out the reaction a (3S)-3-hydroxyacyl-CoA = a (2E)-enoyl-CoA + H2O. It catalyses the reaction a 4-saturated-(3S)-3-hydroxyacyl-CoA = a (3E)-enoyl-CoA + H2O. The enzyme catalyses a (3Z)-enoyl-CoA = a 4-saturated (2E)-enoyl-CoA. The catalysed reaction is a (3E)-enoyl-CoA = a 4-saturated (2E)-enoyl-CoA. The chain is Putative fatty acid oxidation complex trifunctional enzyme from Rickettsia prowazekii (strain Madrid E).